The following is a 268-amino-acid chain: tRNA pseudouridine synthase A (268 aa).

Aspartate 52 functions as the Nucleophile in the catalytic mechanism. Tyrosine 110 provides a ligand contact to substrate.

It belongs to the tRNA pseudouridine synthase TruA family. In terms of assembly, homodimer.

It catalyses the reaction uridine(38/39/40) in tRNA = pseudouridine(38/39/40) in tRNA. Its function is as follows. Formation of pseudouridine at positions 38, 39 and 40 in the anticodon stem and loop of transfer RNAs. The sequence is that of tRNA pseudouridine synthase A from Prochlorococcus marinus (strain MIT 9215).